We begin with the raw amino-acid sequence, 500 residues long: Glycerol kinase (500 aa).

Thr-12 contacts ADP. The ATP site is built by Thr-12, Thr-13, and Ser-14. Thr-12 is a binding site for sn-glycerol 3-phosphate. Residue Arg-16 coordinates ADP. Positions 82, 83, 135, and 245 each coordinate sn-glycerol 3-phosphate. Glycerol contacts are provided by Arg-82, Glu-83, Tyr-135, Asp-245, and Gln-246. Residues Thr-267 and Gly-310 each coordinate ADP. The ATP site is built by Thr-267, Gly-310, Gln-314, and Gly-411. ADP is bound by residues Gly-411 and Asn-415.

This sequence belongs to the FGGY kinase family. Homotetramer and homodimer (in equilibrium).

The enzyme catalyses glycerol + ATP = sn-glycerol 3-phosphate + ADP + H(+). The protein operates within polyol metabolism; glycerol degradation via glycerol kinase pathway; sn-glycerol 3-phosphate from glycerol: step 1/1. Its activity is regulated as follows. Activated by phosphorylation and inhibited by fructose 1,6-bisphosphate (FBP). Its function is as follows. Key enzyme in the regulation of glycerol uptake and metabolism. Catalyzes the phosphorylation of glycerol to yield sn-glycerol 3-phosphate. This is Glycerol kinase from Clostridium perfringens (strain SM101 / Type A).